We begin with the raw amino-acid sequence, 498 residues long: Ribosomal RNA small subunit methyltransferase G 2 (498 aa).

The methyltransferase G stretch occupies residues 1 to 230 (MRNGTIRYPG…FQRLGPPTRI (230 aa)). 3 residues coordinate S-adenosyl-L-methionine: G89, M94, and R154. Residues 231–498 (RKETAMKRHG…SQTKHSPAPA (268 aa)) form a methyltransferase TrmH family region.

The protein in the N-terminal section; belongs to the methyltransferase superfamily. RNA methyltransferase RsmG family. This sequence in the C-terminal section; belongs to the class IV-like SAM-binding methyltransferase superfamily. RNA methyltransferase TrmH family.

The protein localises to the cytoplasm. It carries out the reaction guanosine(527) in 16S rRNA + S-adenosyl-L-methionine = N(7)-methylguanosine(527) in 16S rRNA + S-adenosyl-L-homocysteine. Its function is as follows. Specifically methylates the N7 position of guanine in position 527 of 16S rRNA. This chain is Ribosomal RNA small subunit methyltransferase G 2 (rsmG2), found in Syntrophobacter fumaroxidans (strain DSM 10017 / MPOB).